A 119-amino-acid chain; its full sequence is Beta-2-microglobulin (119 aa).

The signal sequence occupies residues 1–20 (MARSVTVIFLVLVSLAVVLA). Positions 25 to 114 (PQIQVYSRHP…VTLKEPKTVT (90 aa)) constitute an Ig-like C1-type domain. The cysteines at positions 45 and 100 are disulfide-linked.

This sequence belongs to the beta-2-microglobulin family. In terms of assembly, heterodimer of an alpha chain and a beta chain. Beta-2-microglobulin is the beta-chain of major histocompatibility complex class I molecules. Forms a heterotrimer with MR1 and a metabolite antigen.

The protein localises to the secreted. In terms of biological role, component of the class I major histocompatibility complex (MHC). Involved in the presentation of peptide antigens to the immune system. The polypeptide is Beta-2-microglobulin (B2m) (Rattus norvegicus (Rat)).